A 150-amino-acid chain; its full sequence is Putative F-box protein At2g33655 (150 aa).

The F-box domain occupies 1–47; sequence MEKMSDLPRELVEEILSRVPVKSMREVRVTCKTWNALSKHISKAEAA.

This is Putative F-box protein At2g33655 from Arabidopsis thaliana (Mouse-ear cress).